The primary structure comprises 468 residues: Chromosomal replication initiator protein DnaA (468 aa).

The segment at 1 to 84 (MSSSLWLQCM…RFEVGSRPVA (84 aa)) is domain I, interacts with DnaA modulators. Positions 81–113 (RPVAAPKPAPTRTPADVAAESSAPAQLQARKPV) are disordered. Residues 84–131 (AAPKPAPTRTPADVAAESSAPAQLQARKPVHKTWDDDAQAIADINHRS) are domain II. A domain III, AAA+ region region spans residues 132–348 (NVNPKHKFNN…GALNRVIANA (217 aa)). Glycine 176, glycine 178, lysine 179, and threonine 180 together coordinate ATP. The interval 349-468 (NFTGRPITID…YSNLIRTLSS (120 aa)) is domain IV, binds dsDNA.

Belongs to the DnaA family. As to quaternary structure, oligomerizes as a right-handed, spiral filament on DNA at oriC.

The protein resides in the cytoplasm. In terms of biological role, plays an essential role in the initiation and regulation of chromosomal replication. ATP-DnaA binds to the origin of replication (oriC) to initiate formation of the DNA replication initiation complex once per cell cycle. Binds the DnaA box (a 9 base pair repeat at the origin) and separates the double-stranded (ds)DNA. Forms a right-handed helical filament on oriC DNA; dsDNA binds to the exterior of the filament while single-stranded (ss)DNA is stabiized in the filament's interior. The ATP-DnaA-oriC complex binds and stabilizes one strand of the AT-rich DNA unwinding element (DUE), permitting loading of DNA polymerase. After initiation quickly degrades to an ADP-DnaA complex that is not apt for DNA replication. Binds acidic phospholipids. The polypeptide is Chromosomal replication initiator protein DnaA (Vibrio vulnificus (strain CMCP6)).